The primary structure comprises 143 residues: Acyl carrier protein 3, chloroplastic (143 aa).

The transit peptide at 1–60 (MATAAAGSSLICIKSASCSLNRAQVPSGLSSLRSVSLPISGKIFPSLRSSRGPLSFRVCC) directs the protein to the chloroplast. One can recognise a Carrier domain in the interval 64-139 (QETVTRVCEI…DAADLIEKLV (76 aa)). An O-(pantetheine 4'-phosphoryl)serine modification is found at Ser99.

The protein belongs to the acyl carrier protein (ACP) family. Post-translationally, 4'-phosphopantetheine is transferred from CoA to a specific serine of apo-ACP by acpS. This modification is essential for activity because fatty acids are bound in thioester linkage to the sulfhydryl of the prosthetic group.

It localises to the plastid. It is found in the chloroplast. The protein operates within lipid metabolism; fatty acid biosynthesis. Carrier of the growing fatty acid chain in fatty acid biosynthesis. The chain is Acyl carrier protein 3, chloroplastic (ACL1.3) from Cuphea lanceolata (Cigar flower).